Here is a 670-residue protein sequence, read N- to C-terminus: Soluble lamin-associated protein of 75 kDa (670 aa).

Disordered stretches follow at residues 273-301 (PKRP…SSEM) and 314-670 (STSE…AKLT). Position 350 is a phosphoserine (S350). The span at 358 to 375 (SQTSLTASINKLESTARP) shows a compositional bias: polar residues. Residues 378–387 (SSEEFLEEEP) show a composition bias toward acidic residues. Phosphoserine is present on S379. Residues 414 to 423 (EKQDGEKESE) show a composition bias toward basic and acidic residues. A compositionally biased stretch (acidic residues) spans 442-453 (TEEEDSTSEVLD). At S449 the chain carries Phosphoserine. Residues 460–470 (PFNSSEDSTNL) show a composition bias toward polar residues. Basic and acidic residues-rich tracts occupy residues 479–494 (KPPE…RIPD) and 504–514 (SDEKGHMEEKL). S515 carries the post-translational modification Phosphoserine. 2 stretches are compositionally biased toward polar residues: residues 558 to 569 (ENLSPNTTSSLE) and 579 to 591 (PQET…QSSL). 3 positions are modified to phosphoserine: S615, S618, and S635. Over residues 651 to 670 (NLRRKAKGHKGPAKKKAKLT) the composition is skewed to basic residues.

Belongs to the FAM169 family.

The protein localises to the nucleus envelope. It localises to the nucleus inner membrane. The sequence is that of Soluble lamin-associated protein of 75 kDa (FAM169A) from Homo sapiens (Human).